The sequence spans 676 residues: E3 ubiquitin-protein ligase ICP0 (676 aa).

Residues 13–52 (CCICLDAITGAARALPCLHAFCLACIRRWLEGRPTCPLCK) form an RING-type zinc finger. 3 disordered regions span residues 101-153 (DLTA…GGRA), 266-517 (HLIP…AGAQ), and 555-676 (AAIS…AWRQ). The segment covering 123 to 153 (EAGGGAGGAEEAGEARGAGAGRAAGAAGGRA) has biased composition (gly residues). Positions 286–303 (SDSDSEGSEDDSWSESEE) are enriched in acidic residues. Residues 304–314 (SSSGLSTSDLT) are compositionally biased toward low complexity. The segment covering 315 to 328 (AIDDTETEPETDAE) has biased composition (acidic residues). The segment covering 351–361 (YVSTRGRQTPA) has biased composition (polar residues). Composition is skewed to low complexity over residues 375-388 (GRAA…SSRS) and 397-411 (LPAA…QARA). A compositionally biased stretch (gly residues) spans 422-439 (GAGLGVAAGETAGWGAGS). Positions 440–450 (EEGRGERRARL) are enriched in basic and acidic residues. Over residues 474–484 (TPAPAPAPAPA) the composition is skewed to pro residues. Positions 555–597 (AAISTRAPTPSPAGRAPAADPRRAGAPALAGAARAEVGRNGNP) are enriched in low complexity.

Belongs to the simplexviruses ICp0 family. In terms of processing, auto-ubiquitinated. Post-translationally, transactivation activity is possibly regulated through phosphorylation by casein kinase II.

It carries out the reaction S-ubiquitinyl-[E2 ubiquitin-conjugating enzyme]-L-cysteine + [acceptor protein]-L-lysine = [E2 ubiquitin-conjugating enzyme]-L-cysteine + N(6)-ubiquitinyl-[acceptor protein]-L-lysine.. Functionally, evades nuclear antiviral defenses triggered by dsDNA viruses. Acts during the initial stages of lytic infection and the reactivation of latent viral genome. Prevents the antiviral effect of nuclear bodies by degrading host PML and SP100. The protein is E3 ubiquitin-protein ligase ICP0 (BICP0) of Bovine herpesvirus 1.1 (strain Cooper) (BoHV-1).